The sequence spans 497 residues: Glycerol kinase (497 aa).

An ADP-binding site is contributed by Thr13. Residues Thr13, Thr14, and Ser15 each contribute to the ATP site. Thr13 serves as a coordination point for sn-glycerol 3-phosphate. An ADP-binding site is contributed by Arg17. Arg83, Glu84, and Tyr135 together coordinate sn-glycerol 3-phosphate. Residues Arg83, Glu84, and Tyr135 each contribute to the glycerol site. Position 231 is a phosphohistidine; by HPr (His231). Position 245 (Asp245) interacts with sn-glycerol 3-phosphate. Glycerol is bound by residues Asp245 and Gln246. Positions 267 and 310 each coordinate ADP. ATP is bound by residues Thr267, Gly310, Gln314, and Gly411. The ADP site is built by Gly411 and Asn415.

It belongs to the FGGY kinase family. As to quaternary structure, homotetramer and homodimer (in equilibrium). In terms of processing, the phosphoenolpyruvate-dependent sugar phosphotransferase system (PTS), including enzyme I, and histidine-containing protein (HPr) are required for the phosphorylation, which leads to the activation of the enzyme.

The enzyme catalyses glycerol + ATP = sn-glycerol 3-phosphate + ADP + H(+). The protein operates within polyol metabolism; glycerol degradation via glycerol kinase pathway; sn-glycerol 3-phosphate from glycerol: step 1/1. With respect to regulation, activated by phosphorylation and inhibited by fructose 1,6-bisphosphate (FBP). Its function is as follows. Key enzyme in the regulation of glycerol uptake and metabolism. Catalyzes the phosphorylation of glycerol to yield sn-glycerol 3-phosphate. The polypeptide is Glycerol kinase (Listeria monocytogenes serotype 4a (strain HCC23)).